Reading from the N-terminus, the 1068-residue chain is Transcription factor PDR1 (1068 aa).

The interval 1 to 38 (MRGLTPKNGVHIETGPDTESSADSSNFSTGFSGKIRKP) is disordered. Residues 17-31 (DTESSADSSNFSTGF) are compositionally biased toward polar residues. Serine 21 carries the post-translational modification Phosphoserine. Positions 46–72 (CDNCRKRKIKCNGKFPCASCEIYSCEC) form a DNA-binding region, zn(2)-C6 fungal-type. Disordered regions lie at residues 95–120 (TVQVKEETDSSSTSFSNPQRCTDGPC) and 133–166 (KLGGRSSGDNSGSDGKNDDDVNRNGFYEDDSESQ). Residues 104 to 114 (SSSTSFSNPQR) show a composition bias toward polar residues. Low complexity predominate over residues 135 to 146 (GGRSSGDNSGSD). A phosphoserine mark is found at serine 930, serine 942, and serine 948. Positions 1005 to 1029 (NTNEINNNNNNNNNNKNNINNINNN) are disordered. The 9aaTAD motif lies at 1054–1062 (EDLYSILWS).

The protein resides in the nucleus. Functionally, positive regulator of proteins involved in permeability. PDR1 and PDR3 jointly control the transcription level of both SNQ2 and PDR5. This Saccharomyces cerevisiae (strain ATCC 204508 / S288c) (Baker's yeast) protein is Transcription factor PDR1 (PDR1).